A 458-amino-acid polypeptide reads, in one-letter code: Ribosomal protein uS12 methylthiotransferase RimO (458 aa).

Positions 8 to 119 constitute an MTTase N-terminal domain; that stretch reads PTVAFAHLGC…IVDVLQRVEV (112 aa). Residues Cys17, Cys53, Cys82, Cys157, Cys161, and Cys164 each coordinate [4Fe-4S] cluster. Residues 143-372 enclose the Radical SAM core domain; sequence TTDQAVAFLK…MALQQPISAE (230 aa). The 72-residue stretch at 375-446 folds into the TRAM domain; sequence SRWVGRTVDV…IYDLNGQMVG (72 aa).

It belongs to the methylthiotransferase family. RimO subfamily. It depends on [4Fe-4S] cluster as a cofactor.

It localises to the cytoplasm. The enzyme catalyses L-aspartate(89)-[ribosomal protein uS12]-hydrogen + (sulfur carrier)-SH + AH2 + 2 S-adenosyl-L-methionine = 3-methylsulfanyl-L-aspartate(89)-[ribosomal protein uS12]-hydrogen + (sulfur carrier)-H + 5'-deoxyadenosine + L-methionine + A + S-adenosyl-L-homocysteine + 2 H(+). Functionally, catalyzes the methylthiolation of an aspartic acid residue of ribosomal protein uS12. This Synechococcus sp. (strain CC9605) protein is Ribosomal protein uS12 methylthiotransferase RimO.